The following is a 561-amino-acid chain: Potassium-transporting ATPase potassium-binding subunit (561 aa).

A run of 12 helical transmembrane segments spans residues 1-21 (MMAS…LLAR), 62-82 (YLLA…LILM), 132-152 (GLTV…FALM), 173-193 (ITLY…VSQG), 253-273 (FVQM…FGDV), 283-303 (LLWS…WAEV), 327-347 (FGIL…CGAV), 356-376 (ALGG…FGGV), 379-399 (GLYG…LMIG), 416-436 (MTAL…ALAM), 483-503 (MLLA…VLAI), and 526-546 (LFIA…FIPA).

The protein belongs to the KdpA family. As to quaternary structure, the system is composed of three essential subunits: KdpA, KdpB and KdpC.

The protein resides in the cell inner membrane. Part of the high-affinity ATP-driven potassium transport (or Kdp) system, which catalyzes the hydrolysis of ATP coupled with the electrogenic transport of potassium into the cytoplasm. This subunit binds the periplasmic potassium ions and delivers the ions to the membrane domain of KdpB through an intramembrane tunnel. In Erwinia tasmaniensis (strain DSM 17950 / CFBP 7177 / CIP 109463 / NCPPB 4357 / Et1/99), this protein is Potassium-transporting ATPase potassium-binding subunit.